The following is a 173-amino-acid chain: MKTWHMVVVIGFLATLAQTSLALKEEDCEVCVKTVRRFADSLDDSTKKDYKQIETAFKKFCKAQKNKEHRFCYYLGGLEESATGILNELSKPLSWSMPAEKICEKLKKKDAQICDLRYEKQIDLNSVDLKKLKVRDLKKILNDWDESCDGCLEKGDFIKRIEELKPKYSRSEL.

The signal sequence occupies residues 1 to 22; that stretch reads MKTWHMVVVIGFLATLAQTSLA. 4 disulfides stabilise this stretch: Cys-28–Cys-114, Cys-31–Cys-103, Cys-61–Cys-72, and Cys-148–Cys-151.

The protein belongs to the ARMET family.

It localises to the secreted. Functionally, required during the maturation of the embryonic nervous system for maintenance of neuronal and cuticular connectivity. Essential for maintenance of dopaminergic neurons and dopamine levels. This is Mesencephalic astrocyte-derived neurotrophic factor homolog from Drosophila simulans (Fruit fly).